A 158-amino-acid polypeptide reads, in one-letter code: Transcription elongation factor GreA (158 aa).

The protein belongs to the GreA/GreB family.

Its function is as follows. Necessary for efficient RNA polymerase transcription elongation past template-encoded arresting sites. The arresting sites in DNA have the property of trapping a certain fraction of elongating RNA polymerases that pass through, resulting in locked ternary complexes. Cleavage of the nascent transcript by cleavage factors such as GreA or GreB allows the resumption of elongation from the new 3'terminus. GreA releases sequences of 2 to 3 nucleotides. This is Transcription elongation factor GreA from Methylobacterium sp. (strain 4-46).